Consider the following 311-residue polypeptide: Methionyl-tRNA formyltransferase (311 aa).

110 to 113 (SLLP) lines the (6S)-5,6,7,8-tetrahydrofolate pocket.

It belongs to the Fmt family.

The enzyme catalyses L-methionyl-tRNA(fMet) + (6R)-10-formyltetrahydrofolate = N-formyl-L-methionyl-tRNA(fMet) + (6S)-5,6,7,8-tetrahydrofolate + H(+). In terms of biological role, attaches a formyl group to the free amino group of methionyl-tRNA(fMet). The formyl group appears to play a dual role in the initiator identity of N-formylmethionyl-tRNA by promoting its recognition by IF2 and preventing the misappropriation of this tRNA by the elongation apparatus. This is Methionyl-tRNA formyltransferase from Sulfurihydrogenibium sp. (strain YO3AOP1).